Here is a 97-residue protein sequence, read N- to C-terminus: Ice-structuring protein (97 aa).

The signal sequence occupies residues 1 to 23; sequence MALSLFTVGQLIFLFWTLRITEA. The propeptide at 24–48 is removed by a dipeptidylpeptidase; it reads NPDPAAKAAPAAVADPAAAAAAAVA.

Belongs to the type-I AFP family. As to expression, detected in blood serum (at protein level).

The protein localises to the secreted. Its function is as follows. Contributes to protect fish blood from freezing at subzero sea water temperatures. Lowers the blood freezing point. Binds to nascent ice crystals and prevents further growth. This Myzopsetta ferruginea (Yellowtail flounder) protein is Ice-structuring protein.